Here is a 222-residue protein sequence, read N- to C-terminus: Transmembrane reductase CYB561D2 (222 aa).

Topologically, residues 2–17 are cytoplasmic; sequence ALSVETESHIYRALRT. The 204-residue stretch at 14–217 folds into the Cytochrome b561 domain; the sequence is ALRTVSGAAA…NQVSNAYLYR (204 aa). Residues 18 to 38 form a helical membrane-spanning segment; sequence VSGAAAHLVALGFTIFVAVLA. Residues 39-46 are Lumenal-facing; sequence RPGSSLFS. Residues 47-67 form a helical membrane-spanning segment; it reads WHPVLMSLAFSFLMTEALLVF. His48 contributes to the heme b binding site. Over 68 to 85 the chain is Cytoplasmic; it reads SPESSLLRSLSRKGRARC. Residues His86 and His120 each contribute to the heme b site. Residues 86–106 form a helical membrane-spanning segment; sequence HWVLQLLALLCALLGLGLVIL. Residues 107–122 are Lumenal-facing; sequence HKEQLGKAHLATWHGR. Residues 123-143 form a helical membrane-spanning segment; it reads AGLLAVLWAGLQCSGGVGLLY. The Cytoplasmic segment spans residues 144–162; sequence PKLLPRWPLAKLKLYHATS. A heme b-binding site is contributed by His159. A helical membrane pass occupies residues 163 to 183; sequence GLVGYLLGGASLLLGMCSLWF. At 184–186 the chain is on the lumenal side; that stretch reads TAT. Residues 187 to 207 traverse the membrane as a helical segment; sequence VTGGVWYLAVLCPVITSLVIM. Residues 208-222 lie on the Cytoplasmic side of the membrane; that stretch reads NQVSNAYLYRKRIQP.

The cofactor is heme b.

It is found in the endoplasmic reticulum membrane. The protein resides in the cytoplasmic vesicle membrane. The catalysed reaction is monodehydro-L-ascorbate radical(out) + L-ascorbate(in) = monodehydro-L-ascorbate radical(in) + L-ascorbate(out). It catalyses the reaction Fe(3+)(out) + L-ascorbate(in) = monodehydro-L-ascorbate radical(in) + Fe(2+)(out) + H(+). Functionally, transmembrane reductase that may use ascorbate as an electron donor in the cytoplasm and transfer electrons across endoplasmic reticulum membranes to reduce monodehydro-L-ascorbate radical and iron cations Fe(3+) in the lumen of that compartment. The protein is Transmembrane reductase CYB561D2 of Bos taurus (Bovine).